The primary structure comprises 662 residues: F-box/WD repeat-containing protein pof10 (662 aa).

The span at 1-16 shows a compositional bias: polar residues; it reads MKSEPTSLDFTSSNLR. Positions 1–27 are disordered; that stretch reads MKSEPTSLDFTSSNLRRMNRDHSSNNT. In terms of domain architecture, F-box spans 28 to 74; it reads NRTVLNLPKEILIIIFSFLDPRSLLSAQCTCKYWKKLLSDDLSWRTA. WD repeat units follow at residues 215–260, 263–302, and 429–468; these read SHAD…SLQS, FRSS…GYAR, and TAYS…FLKK. One can recognise a UIM 1 domain in the interval 581 to 600; sequence SEEEIIAYVTMLSQEEEAKR. The interval 617 to 645 is disordered; it reads ENDEQATSSLNALSSNHEPPQEQANVAEL. Residues 621–640 are compositionally biased toward polar residues; sequence QATSSLNALSSNHEPPQEQA. Positions 646–662 constitute a UIM 2 domain; that stretch reads NEQEQIELAMRLSLMEM.

As to quaternary structure, part of a SCF (SKP1-cullin-F-box) protein ligase complex. Interacts with skp1.

The protein localises to the cytoplasm. Its function is as follows. Probably recognizes and binds to some phosphorylated proteins and promotes their ubiquitination and degradation. This is F-box/WD repeat-containing protein pof10 (pof10) from Schizosaccharomyces pombe (strain 972 / ATCC 24843) (Fission yeast).